The primary structure comprises 103 residues: Large ribosomal subunit protein P1 (103 aa).

The tract at residues Pro-66–Asp-103 is disordered. The segment covering Val-80–Glu-90 has biased composition (basic and acidic residues). Residues Ser-91–Asp-103 are compositionally biased toward acidic residues.

The protein belongs to the eukaryotic ribosomal protein P1/P2 family. In terms of assembly, P1 and P2 exist as dimers at the large ribosomal subunit.

Its function is as follows. Plays an important role in the elongation step of protein synthesis. The chain is Large ribosomal subunit protein P1 from Polyorchis penicillatus (Hydromedusa).